The primary structure comprises 832 residues: Sodium/hydrogen exchanger 3 (832 aa).

A signal peptide spans 1–29 (MGRNRSGCVARCVSLTALVLLLCCPVVRS). Residues 30 to 66 (SEAETDPDSHTEHGDSHGGSREGNDTGFQIVTFRWEH) lie on the Extracellular side of the membrane. A disordered region spans residues 31 to 51 (EAETDPDSHTEHGDSHGGSRE). The span at 36–51 (PDSHTEHGDSHGGSRE) shows a compositional bias: basic and acidic residues. Residues 67-89 (VQTPYVIALWILVASLGKIVFHL) traverse the membrane as a helical segment. Residues 90-97 (SEKVTSVV) lie on the Cytoplasmic side of the membrane. Residues 98–117 (PESALLIVLGLILGGIVWAA) traverse the membrane as a helical segment. At 118–126 (DHSASFTLT) the chain is on the extracellular side. Residues 127-144 (PTVFFFYLLPPIVLDAGY) form a helical membrane-spanning segment. Over 145-147 (FMP) the chain is Cytoplasmic. The chain crosses the membrane as a helical span at residues 148–183 (NRHFFGNLGTILTYAVIGTVWNAATTGLSLYGVFLL). Residues glycine 153, glycine 156, and threonine 157 each contribute to the a 1,2-diacyl-sn-glycero-3-phospho-(1D-myo-inositol) site. Residues 184 to 196 (GLMGDLKAGLLEF) lie on the Extracellular side of the membrane. Residues 197 to 218 (LLFGSLIAAVDPVAVLAVFEEV) form a helical membrane-spanning segment. Residues 219–220 (HV) lie on the Cytoplasmic side of the membrane. Residues 221–252 (NEVLFIIVFGESLLNDAVTVVLYNVFNSFVEV) form a helical membrane-spanning segment. The Extracellular portion of the chain corresponds to 253–259 (GAGNVQG). A helical membrane pass occupies residues 260–294 (LDYFKGIVSFFVVSLGGTAVGIIFAFILSLVTRFT). Topologically, residues 295 to 296 (KH) are cytoplasmic. A helical membrane pass occupies residues 297-319 (VRVIEPGFVFVISYLSYLTADML). The Extracellular portion of the chain corresponds to 320-321 (SL). The helical transmembrane segment at 322-338 (SAILAITFCGICCQKYV) threads the bilayer. The Cytoplasmic portion of the chain corresponds to 339-345 (KANLCEQ). A helical transmembrane segment spans residues 346–374 (SITTVRYAMKMLASGAETIIFMFLGISAV). The Extracellular segment spans residues 375 to 382 (NPTIWTWN). A helical membrane pass occupies residues 383 to 404 (TAFILLTLVFISVYRVIGVVIQ). At 405–417 (TWILNHYRVVQLE) the chain is on the cytoplasmic side. A helical transmembrane segment spans residues 418-441 (IIDQVVMSYGGLRGAVAFALVVLL). Over 442-448 (DSNYVGE) the chain is Extracellular. The helical transmembrane segment at 449 to 482 (RRLFVSTTIIVVYFTVIFQGLTIKPLVKWLKVKR) threads the bilayer. Residues 483–832 (SQHKEPLLNE…PLSFLPESSM (350 aa)) are Cytoplasmic-facing. Glutamine 512, isoleucine 513, and histidine 515 together coordinate a 1,2-diacyl-sn-glycero-3-phospho-(1D-myo-inositol). The tract at residues 740 to 760 (TPASNDADETGTGIDNPSFSN) is disordered.

This sequence belongs to the monovalent cation:proton antiporter 1 (CPA1) transporter (TC 2.A.36) family. Homodimer. Detected in early distal renal tubules in the kidney bundle zone, in proximal and late distal tubules in the kidney sinus zone, in absorptive epithelial cells of the intestine and in rectal epithelium (at protein level). Isoform 1 is expressed strongly in the gills, at intermediate levels in the kidney, spleen, rectum, spiral intestine and skin, and weakly in the brain, blood and rectal gland. Isoform 2 is expressed strongly in the kidney, rectum and spiral intestine, and weakly in muscles and the rectal gland.

The protein localises to the apical cell membrane. Its subcellular location is the cell membrane. It localises to the recycling endosome membrane. The protein resides in the early endosome membrane. It carries out the reaction Na(+)(in) + H(+)(out) = Na(+)(out) + H(+)(in). Seems to switch between active and inactive modes in response to various stimuli. Activated directly or indirectly by membrane phosphatidylinositol (PIs). Regulated by a variety of auxiliary proteins, which facilitate the maturation, cell surface expression and function of the transporter. Inhibited specifically by the drug tenapanor. In terms of biological role, plasma membrane Na(+)/H(+) antiporter. Exchanges intracellular H(+) ions for extracellular Na(+) in 1:1 stoichiometry, playing a key role in salt and fluid absorption and pH homeostasis. Major apical Na(+)/H(+) exchanger in kidney and intestine playing an important role in renal and intestine Na(+) absorption and blood pressure regulation. The protein is Sodium/hydrogen exchanger 3 of Triakis scyllium (Banded houndshark).